The chain runs to 225 residues: Endonuclease V (225 aa).

Positions 43 and 110 each coordinate Mg(2+).

It belongs to the endonuclease V family. Mg(2+) is required as a cofactor.

Its subcellular location is the cytoplasm. The catalysed reaction is Endonucleolytic cleavage at apurinic or apyrimidinic sites to products with a 5'-phosphate.. DNA repair enzyme involved in the repair of deaminated bases. Selectively cleaves double-stranded DNA at the second phosphodiester bond 3' to a deoxyinosine leaving behind the intact lesion on the nicked DNA. The chain is Endonuclease V from Thermotoga sp. (strain RQ2).